The following is a 249-amino-acid chain: Uridylate kinase (249 aa).

15–18 contributes to the ATP binding site; it reads KLSG. The segment at 23–28 is involved in allosteric activation by GTP; sequence GEEGFG. Glycine 57 is a UMP binding site. ATP-binding residues include glycine 58 and arginine 62. UMP-binding positions include aspartate 77 and 138 to 145; that span reads TGNPFFTT. Positions 165, 171, and 174 each coordinate ATP.

This sequence belongs to the UMP kinase family. Homohexamer.

The protein localises to the cytoplasm. The catalysed reaction is UMP + ATP = UDP + ADP. It participates in pyrimidine metabolism; CTP biosynthesis via de novo pathway; UDP from UMP (UMPK route): step 1/1. Allosterically activated by GTP. Inhibited by UTP. Catalyzes the reversible phosphorylation of UMP to UDP. In Psychromonas ingrahamii (strain DSM 17664 / CCUG 51855 / 37), this protein is Uridylate kinase.